A 553-amino-acid polypeptide reads, in one-letter code: Putative transport protein YidE (553 aa).

Transmembrane regions (helical) follow at residues isoleucine 4–valine 24, glycine 28–serine 48, phenylalanine 65–serine 85, leucine 95–phenylalanine 115, and methionine 158–leucine 178. 2 consecutive RCK C-terminal domains span residues glutamine 191 to glutamine 276 and aspartate 279 to asparagine 361. Helical transmembrane passes span methionine 371–valine 391, glycine 393–leucine 413, isoleucine 439–valine 459, leucine 464–leucine 484, tyrosine 493–alanine 513, and leucine 533–glycine 553.

This sequence belongs to the AAE transporter (TC 2.A.81) family. YidE subfamily.

It localises to the cell membrane. This Escherichia coli O6:K15:H31 (strain 536 / UPEC) protein is Putative transport protein YidE.